Here is a 356-residue protein sequence, read N- to C-terminus: Acyl-coenzyme A diphosphatase NUDT19 (356 aa).

Residues 10-241 (AATVMLAAGW…IWLAPPQFYE (232 aa)) enclose the Nudix hydrolase domain. The interval 72-94 (PRFGLGPEPPRQPPFPGLSHGDA) is disordered. The span at 78–87 (PEPPRQPPFP) shows a compositional bias: pro residues. The short motif at 97–118 (AALPDDVALRICAIRETFEEAG) is the Nudix box element. The Mg(2+) site is built by E112 and E116. Residue K299 is modified to N6-succinyllysine. The Microbody targeting signal motif lies at 354–356 (ARL).

It belongs to the Nudix hydrolase family. As to quaternary structure, monomer. Mg(2+) serves as cofactor. The cofactor is Mn(2+).

Its subcellular location is the peroxisome. The catalysed reaction is an acyl-CoA + H2O = an acyl-4'-phosphopantetheine + adenosine 3',5'-bisphosphate + 2 H(+). It catalyses the reaction CoA + H2O = (R)-4'-phosphopantetheine + adenosine 3',5'-bisphosphate + 2 H(+). It carries out the reaction hexanoyl-CoA + H2O = hexanoyl-4'-phosphopantetheine + adenosine 3',5'-bisphosphate + 2 H(+). The enzyme catalyses octanoyl-CoA + H2O = S-octanoyl-4'-phosphopantetheine + adenosine 3',5'-bisphosphate + 2 H(+). The catalysed reaction is butanoyl-CoA + H2O = S-butanoyl-4'-phosphopantetheine + adenosine 3',5'-bisphosphate + 2 H(+). It catalyses the reaction propanoyl-CoA + H2O = propanoyl-4'-phosphopantetheine + adenosine 3',5'-bisphosphate + 2 H(+). It carries out the reaction malonyl-CoA + H2O = malonyl-4'-phosphopantetheine + adenosine 3',5'-bisphosphate + 2 H(+). The enzyme catalyses succinyl-CoA + H2O = succinyl-4'-phosphopantetheine + adenosine 3',5'-bisphosphate + 2 H(+). The catalysed reaction is choloyl-CoA + H2O = S-choloyl-4'-phosphopantetheine + adenosine 3',5'-bisphosphate + 2 H(+). It catalyses the reaction 4,8-dimethylnonanoyl-CoA + H2O = S-(4,8-dimethylnonanoyl)-4'-phosphopantetheine + adenosine 3',5'-bisphosphate + 2 H(+). It carries out the reaction (9Z,12Z,15Z)-octadecatrienoyl-CoA + H2O = S-(9Z,12Z,15Z-octadecatrienoyl)-4'-phosphopantetheine + adenosine 3',5'-bisphosphate + 2 H(+). The enzyme catalyses (9Z,12Z)-octadecadienoyl-CoA + H2O = S-(9Z,12Z-octadecadienoyl)-4'-phosphopantetheine + adenosine 3',5'-bisphosphate + 2 H(+). The catalysed reaction is (9Z)-hexadecenoyl-CoA + H2O = S-(9Z-hexadecenoyl)-4'-phosphopantetheine + adenosine 3',5'-bisphosphate + 2 H(+). It catalyses the reaction (9Z)-tetradecenoyl-CoA + H2O = S-(9Z-tetradecenoyl)-4'-phosphopantetheine + adenosine 3',5'-bisphosphate + 2 H(+). It carries out the reaction (6Z)-octenoyl-CoA + H2O = S-(6Z-octenoyl)-4'-phosphopantetheine + adenosine 3',5'-bisphosphate + 2 H(+). The enzyme catalyses hexadecanoyl-CoA + H2O = S-hexadecanoyl-4'-phosphopantetheine + adenosine 3',5'-bisphosphate + 2 H(+). The catalysed reaction is tetradecanoyl-CoA + H2O = tetradecanoyl-4'-phosphopantetheine + adenosine 3',5'-bisphosphate + 2 H(+). It catalyses the reaction dodecanoyl-CoA + H2O = S-dodecanoyl-4'-phosphopantetheine + adenosine 3',5'-bisphosphate + 2 H(+). It carries out the reaction a 5'-end CoA-ribonucleoside in mRNA + H2O = a 5'-end phospho-adenosine-phospho-ribonucleoside in mRNA + (R)-4'-phosphopantetheine + 2 H(+). Fatty acyl-coenzyme A (CoA) diphosphatase that hydrolyzes fatty acyl-CoA to yield acyl-4'-phosphopantetheine and adenosine 3',5'-bisphosphate. Mediates the hydrolysis of a wide range of CoA esters, including choloyl-CoA and branched-chain fatty-acyl-CoA esters and at low substrate concentrations medium and long-chain fatty-acyl-CoA esters are the primary substrates. Highest activity seen with medium-chain acyl-CoA esters and higher rates of activity seen with the unsaturated acyl-CoA esters compared with the saturated esters. Exhibits decapping activity towards dpCoA-capped RNAs in vitro. The sequence is that of Acyl-coenzyme A diphosphatase NUDT19 (Nudt19) from Mus saxicola (Brown spiny mouse).